Here is a 330-residue protein sequence, read N- to C-terminus: MASSLAQSRISNLQNHLSPLEANNKLRSLVKISPQVSEALSNGRAVVALESTIISHGMPYPQNLQTAKEVESIVRENGAIPATIAILNGVPCIGLSEEELERLASLGKSVQKTAGRDIANVVATRGNGATTVSATLFFASMVGIQVFVTGGIGGVHRHANHSMDISSDLTALGRTPIAVISAGVKSILDIPKTLEYLETQEVYVAAYKSDEFPAFFTEKSGCKAPSRVNSPEDCARVIDANMKLNRQAGILFAIPIPKHHSAAGNLIESATQRALTEAREQNVTGNAETPFLLARVNELTGGTSLAANIALVKNNALIGSQIAVALSQLM.

Glu50 (proton donor) is an active-site residue. Substrate-binding residues include Lys112 and Val132. A Mn(2+)-binding site is contributed by Asp164. Substrate is bound at residue 166-168; that stretch reads SSD. The active-site Nucleophile is Lys185.

This sequence belongs to the pseudouridine-5'-phosphate glycosidase family. Homotrimer. Mn(2+) is required as a cofactor.

Its subcellular location is the peroxisome. It carries out the reaction D-ribose 5-phosphate + uracil = psi-UMP + H2O. Functionally, catalyzes the reversible cleavage of pseudouridine 5'-phosphate (PsiMP) to ribose 5-phosphate and uracil. Functions biologically in the cleavage direction, as part of a pseudouridine degradation pathway. Acts together with the pseudouridine kinase PUKI in the peroxisome to prevent toxic pseudouridine monophosphate accumulation. Can catalyze the formation of pseudouridine 5'-phosphate (reverse reaction) in vitro, with a catalytic efficiency 4 times lower than the hydrolysis reaction. The chain is Pseudouridine-5'-phosphate glycosidase from Arabidopsis thaliana (Mouse-ear cress).